A 418-amino-acid chain; its full sequence is UDP-N-acetylglucosamine 1-carboxyvinyltransferase (418 aa).

Lysine 23 to asparagine 24 lines the phosphoenolpyruvate pocket. Arginine 93 lines the UDP-N-acetyl-alpha-D-glucosamine pocket. Residue aspartate 117 is the Proton donor of the active site. UDP-N-acetyl-alpha-D-glucosamine-binding residues include aspartate 305 and valine 327.

This sequence belongs to the EPSP synthase family. MurA subfamily.

It localises to the cytoplasm. The catalysed reaction is phosphoenolpyruvate + UDP-N-acetyl-alpha-D-glucosamine = UDP-N-acetyl-3-O-(1-carboxyvinyl)-alpha-D-glucosamine + phosphate. Its pathway is cell wall biogenesis; peptidoglycan biosynthesis. Functionally, cell wall formation. Adds enolpyruvyl to UDP-N-acetylglucosamine. In Mycobacterium leprae (strain TN), this protein is UDP-N-acetylglucosamine 1-carboxyvinyltransferase.